The primary structure comprises 46 residues: Probable butyrate kinase (46 aa).

Belongs to the acetokinase family.

Its subcellular location is the cytoplasm. The enzyme catalyses butanoate + ATP = butanoyl phosphate + ADP. This is Probable butyrate kinase (buk) from Geobacillus stearothermophilus (Bacillus stearothermophilus).